The sequence spans 100 residues: Urease subunit gamma (100 aa).

This sequence belongs to the urease gamma subunit family. In terms of assembly, heterotrimer of UreA (gamma), UreB (beta) and UreC (alpha) subunits. Three heterotrimers associate to form the active enzyme.

The protein resides in the cytoplasm. It carries out the reaction urea + 2 H2O + H(+) = hydrogencarbonate + 2 NH4(+). The protein operates within nitrogen metabolism; urea degradation; CO(2) and NH(3) from urea (urease route): step 1/1. In Staphylococcus saprophyticus subsp. saprophyticus (strain ATCC 15305 / DSM 20229 / NCIMB 8711 / NCTC 7292 / S-41), this protein is Urease subunit gamma.